Reading from the N-terminus, the 1131-residue chain is ATP-dependent helicase FUN30 (1131 aa).

Residues 1–70 (MSGSHSNDED…HTSKPLPSGS (70 aa)) form a disordered region. Residues 16–36 (PETSSPTKVASSSPLKPTSPT) show a composition bias toward polar residues. Residues 76–111 (VNLAREFPDFSQTLVQAVFKSNSFNLQSARERLTRL) form a CUE-like region region. The disordered stretch occupies residues 114 to 141 (QRQNWTWNKNASPKKSETPPPVKKSLPL). The residue at position 232 (S232) is a Phosphoserine. Disordered regions lie at residues 242-273 (KYGR…YTES) and 327-350 (NDKD…ANES). Over residues 250-271 (NDEEEEESMMTDDDDASGDDYT) the composition is skewed to acidic residues. S369 carries the phosphoserine modification. A disordered region spans residues 400 to 533 (DLMNLGEDDD…GDDDDDDDDE (134 aa)). Residues 405–416 (GEDDDDDNDDGN) show a composition bias toward acidic residues. A compositionally biased stretch (low complexity) spans 417–432 (NDNNNSNNNNTAGADA). Basic and acidic residues predominate over residues 433-442 (TSKEKEDTKA). At S451 the chain carries Phosphoserine. Acidic residues predominate over residues 480 to 533 (EDEDDDVDLEAIDDELPQSEHEDDDYEEEDEDYNDEEEDVEYDDGDDDDDDDDE). The Helicase ATP-binding domain maps to 584–752 (NLLYQNKMSC…MSLLEFIMPN (169 aa)). 597–604 (DDMGLGKT) provides a ligand contact to ATP. Residues 703 to 706 (DEGH) carry the DEGH box motif. Residues 953–1108 (ALKKLLKTII…EDKKSQDVLE (156 aa)) enclose the Helicase C-terminal domain.

It belongs to the SNF2/RAD54 helicase family. Homodimer.

Its subcellular location is the nucleus. The protein localises to the chromosome. It catalyses the reaction ATP + H2O = ADP + phosphate + H(+). In terms of biological role, DNA helicase that possesses intrinsic ATP-dependent nucleosome-remodeling activity and is both required for DNA repair and heterochromatin organization. Promotes DNA end resection of double-strand breaks (DSBs) following DNA damage: probably acts by weakening histone DNA interactions in nucleosomes flanking DSBs, facilitating single-stranded DNA (ssDNA) production by the EXO1 and SGS1 machinery. Promotes gene silencing at heterochromatin by regulating the chromatin structure within or around silent loci. Also required for heterochromatin organization at centromeres. In Saccharomyces cerevisiae (strain ATCC 204508 / S288c) (Baker's yeast), this protein is ATP-dependent helicase FUN30 (FUN30).